A 547-amino-acid chain; its full sequence is Chaperonin GroEL (547 aa).

ATP contacts are provided by residues 30–33, Lys51, 87–91, Gly415, and Asp495; these read TLGP and DGTTT.

The protein belongs to the chaperonin (HSP60) family. Forms a cylinder of 14 subunits composed of two heptameric rings stacked back-to-back. Interacts with the co-chaperonin GroES.

The protein localises to the cytoplasm. The catalysed reaction is ATP + H2O + a folded polypeptide = ADP + phosphate + an unfolded polypeptide.. Functionally, together with its co-chaperonin GroES, plays an essential role in assisting protein folding. The GroEL-GroES system forms a nano-cage that allows encapsulation of the non-native substrate proteins and provides a physical environment optimized to promote and accelerate protein folding. In Shewanella pealeana (strain ATCC 700345 / ANG-SQ1), this protein is Chaperonin GroEL.